The following is a 1038-amino-acid chain: Probable LRR receptor-like serine/threonine-protein kinase At1g53430 (1038 aa).

The signal sequence occupies residues 1 to 28 (MGFIFSTEKVVYVLLLIFVCLENFGSNA). Residues 29-609 (QLLPEDEVQT…VDTGKPLSNG (581 aa)) are Extracellular-facing. Asn-48, Asn-77, Asn-85, Asn-112, and Asn-127 each carry an N-linked (GlcNAc...) asparagine glycan. LRR repeat units follow at residues 113 to 137 (LTRL…LSQI), 139 to 160 (LEIL…LGDI), 161 to 184 (TTLT…LGNL), 185 to 208 (RSLK…LSNL), 210 to 234 (NLTE…NWTL), and 236 to 256 (ERLD…ISNL). Residues Asn-196, Asn-210, Asn-231, Asn-255, and Asn-258 are each glycosylated (N-linked (GlcNAc...) asparagine). LRR repeat units lie at residues 259 to 281 (LTEL…LRNL), 282 to 305 (MKMK…IGSM), 306 to 328 (SELK…TFRN), 330 to 351 (DAFN…QFII), and 352 to 374 (NSKE…SCNQ). N-linked (GlcNAc...) asparagine glycosylation is found at Asn-339, Asn-363, Asn-471, and Asn-561. Residues 610-630 (AVAGIVIAACAVFGLLVLVIL) traverse the membrane as a helical segment. At 631 to 1038 (RLTGYLGGKE…LDDLTDVKIE (408 aa)) the chain is on the cytoplasmic side. Thr-658 is subject to Phosphothreonine. Positions 669–950 (FDPENKIGEG…EGKIKVQPPL (282 aa)) constitute a Protein kinase domain. ATP is bound by residues 675–683 (IGEGGFGPV) and Lys-697. Position 742 is a phosphotyrosine (Tyr-742). Asp-795 functions as the Proton acceptor in the catalytic mechanism. Ser-828 is modified (phosphoserine). Phosphothreonine is present on residues Thr-829 and Thr-834. The residue at position 842 (Tyr-842) is a Phosphotyrosine. Residues 984–1038 (RNREQDISSSSMDGPWVDSSFSEPGKDVSLQQQEEGRSSSSSRKLLDDLTDVKIE) are disordered. Positions 1027-1038 (KLLDDLTDVKIE) are enriched in basic and acidic residues.

Belongs to the protein kinase superfamily. Ser/Thr protein kinase family.

It localises to the membrane. The enzyme catalyses L-seryl-[protein] + ATP = O-phospho-L-seryl-[protein] + ADP + H(+). It carries out the reaction L-threonyl-[protein] + ATP = O-phospho-L-threonyl-[protein] + ADP + H(+). In Arabidopsis thaliana (Mouse-ear cress), this protein is Probable LRR receptor-like serine/threonine-protein kinase At1g53430.